The sequence spans 393 residues: NAD(P)H-quinone oxidoreductase subunit H, chloroplastic (393 aa).

Belongs to the complex I 49 kDa subunit family. In terms of assembly, NDH is composed of at least 16 different subunits, 5 of which are encoded in the nucleus.

It localises to the plastid. The protein resides in the chloroplast thylakoid membrane. It catalyses the reaction a plastoquinone + NADH + (n+1) H(+)(in) = a plastoquinol + NAD(+) + n H(+)(out). The catalysed reaction is a plastoquinone + NADPH + (n+1) H(+)(in) = a plastoquinol + NADP(+) + n H(+)(out). In terms of biological role, NDH shuttles electrons from NAD(P)H:plastoquinone, via FMN and iron-sulfur (Fe-S) centers, to quinones in the photosynthetic chain and possibly in a chloroplast respiratory chain. The immediate electron acceptor for the enzyme in this species is believed to be plastoquinone. Couples the redox reaction to proton translocation, and thus conserves the redox energy in a proton gradient. The chain is NAD(P)H-quinone oxidoreductase subunit H, chloroplastic from Vitis vinifera (Grape).